The following is a 180-amino-acid chain: Large ribosomal subunit protein uL5 (180 aa).

It belongs to the universal ribosomal protein uL5 family. Part of the 50S ribosomal subunit; part of the 5S rRNA/L5/L18/L25 subcomplex. Contacts the 5S rRNA and the P site tRNA. Forms a bridge to the 30S subunit in the 70S ribosome.

This is one of the proteins that bind and probably mediate the attachment of the 5S RNA into the large ribosomal subunit, where it forms part of the central protuberance. In the 70S ribosome it contacts protein S13 of the 30S subunit (bridge B1b), connecting the 2 subunits; this bridge is implicated in subunit movement. Contacts the P site tRNA; the 5S rRNA and some of its associated proteins might help stabilize positioning of ribosome-bound tRNAs. The sequence is that of Large ribosomal subunit protein uL5 from Symbiobacterium thermophilum (strain DSM 24528 / JCM 14929 / IAM 14863 / T).